We begin with the raw amino-acid sequence, 655 residues long: Chaperone protein dnaK1 (655 aa).

T197 carries the post-translational modification Phosphothreonine; by autocatalysis.

This sequence belongs to the heat shock protein 70 family.

Functionally, acts as a chaperone. The chain is Chaperone protein dnaK1 (dnaK1) from Synechococcus elongatus (strain ATCC 33912 / PCC 7942 / FACHB-805) (Anacystis nidulans R2).